Reading from the N-terminus, the 159-residue chain is Protein-export protein SecB (159 aa).

This sequence belongs to the SecB family. As to quaternary structure, homotetramer, a dimer of dimers. One homotetramer interacts with 1 SecA dimer.

The protein localises to the cytoplasm. In terms of biological role, one of the proteins required for the normal export of preproteins out of the cell cytoplasm. It is a molecular chaperone that binds to a subset of precursor proteins, maintaining them in a translocation-competent state. It also specifically binds to its receptor SecA. The protein is Protein-export protein SecB of Pseudomonas fluorescens (strain SBW25).